The primary structure comprises 226 residues: MARLFRASCLLSLLLAGFIPPSQGQEKSKTDCHAGVGGTIYEYGALTIDGEEYIPFKQYAGKYILFVNVASYUGLTGQYVELNALQEELEPFGLVILGFPCNQFGKQEPGENSEILATLKYVRPGGGFTPNFQLFEKGDVNGEKEQKFYTFLKNSCPPTSELLGSPDRLFWEPMKVHDIRWNFEKFLVGPDGIPIMRWYHRTTVNSVKMDILTYMRRRAVWEAKGK.

An N-terminal signal peptide occupies residues methionine 1–glycine 24. The active site involves selenocysteine 73. Residue selenocysteine 73 is a non-standard amino acid, selenocysteine.

It belongs to the glutathione peroxidase family. Homotetramer. Secreted in plasma.

The protein resides in the secreted. It carries out the reaction 2 glutathione + H2O2 = glutathione disulfide + 2 H2O. The enzyme catalyses tert-butyl hydroperoxide + 2 glutathione = tert-butanol + glutathione disulfide + H2O. Protects cells and enzymes from oxidative damage, by catalyzing the reduction of hydrogen peroxide, lipid peroxides and organic hydroperoxide, by glutathione. This is Glutathione peroxidase 3 from Bos taurus (Bovine).